We begin with the raw amino-acid sequence, 212 residues long: Deoxyribose-phosphate aldolase (212 aa).

The Proton donor/acceptor role is filled by Asp-90. Lys-151 serves as the catalytic Schiff-base intermediate with acetaldehyde. Lys-176 (proton donor/acceptor) is an active-site residue.

This sequence belongs to the DeoC/FbaB aldolase family. DeoC type 1 subfamily.

It localises to the cytoplasm. It carries out the reaction 2-deoxy-D-ribose 5-phosphate = D-glyceraldehyde 3-phosphate + acetaldehyde. It participates in carbohydrate degradation; 2-deoxy-D-ribose 1-phosphate degradation; D-glyceraldehyde 3-phosphate and acetaldehyde from 2-deoxy-alpha-D-ribose 1-phosphate: step 2/2. Its function is as follows. Catalyzes a reversible aldol reaction between acetaldehyde and D-glyceraldehyde 3-phosphate to generate 2-deoxy-D-ribose 5-phosphate. In Halobacterium salinarum (strain ATCC 29341 / DSM 671 / R1), this protein is Deoxyribose-phosphate aldolase.